Consider the following 442-residue polypeptide: RNA-binding protein 34 (442 aa).

Disordered regions lie at residues 1 to 26 (MALG…GVSC) and 60 to 157 (TAEP…VADG). Basic and acidic residues predominate over residues 112–122 (KLSDADKRLAN). Residue K153 is modified to N6-acetyllysine. RRM domains lie at 189–284 (RTVF…LASE) and 291–368 (RSVF…RSVN). K246 participates in a covalent cross-link: Glycyl lysine isopeptide (Lys-Gly) (interchain with G-Cter in SUMO2). S292 is modified (phosphoserine). Residues 418–442 (KAVLMKKKKKGQKKKVQMKKPRKQQ) are disordered. Residues 421 to 442 (LMKKKKKGQKKKVQMKKPRKQQ) show a composition bias toward basic residues.

Belongs to the RRM RBM34 family.

The protein localises to the nucleus. It is found in the nucleolus. The polypeptide is RNA-binding protein 34 (Rbm34) (Mus musculus (Mouse)).